The chain runs to 122 residues: Interferon alpha-inducible protein 27, mitochondrial (122 aa).

Residues 1 to 33 (MEASALTSSAVTSVAKVVRVASGSAVVLPLARI) constitute a mitochondrion transit peptide. Residues 34 to 57 (ATVVIGGVVAMAAVPMVLSAMGFT) traverse the membrane as a helical segment. Lys-69 participates in a covalent cross-link: Glycyl lysine isopeptide (Lys-Gly) (interchain with G-Cter in ubiquitin). Helical transmembrane passes span 71-91 (MSAAAIANGGGVASGSLVATL) and 99-119 (LSGLTKFILGSIGSAIAAVIA). The mediates interaction with SKP2 and hepatitis C virus non-structural protein NS5A stretch occupies residues 76 to 122 (IANGGGVASGSLVATLQSLGATGLSGLTKFILGSIGSAIAAVIARFY). The required for hepatitis C virus non-structural protein NS5A degradation stretch occupies residues 103 to 112 (TKFILGSIGS).

Belongs to the IFI6/IFI27 family. In terms of assembly, homodimer. Interacts with hepatitis C virus/HCV non-structural protein NS5A; promotes the ubiquitin-mediated proteasomal degradation of NS5A. Interacts with SKP2; promotes the ubiquitin-mediated proteasomal degradation of NS5A. Interacts with NR4A1. May interact with BCL2. Post-translationally, ubiquitinated by TRIM21 via 'Lys-6'-linked ubiquitin chains leading to IFI27 mitochondrial migration.

The protein localises to the mitochondrion membrane. Its subcellular location is the nucleus inner membrane. It is found in the endoplasmic reticulum membrane. Probable adapter protein involved in different biological processes. Part of the signaling pathways that lead to apoptosis. Involved in type-I interferon-induced apoptosis characterized by a rapid and robust release of cytochrome C from the mitochondria and activation of BAX and caspases 2, 3, 6, 8 and 9. Also functions in TNFSF10-induced apoptosis. May also have a function in the nucleus, where it may be involved in the interferon-induced negative regulation of the transcriptional activity of NR4A1, NR4A2 and NR4A3 through the enhancement of XPO1-mediated nuclear export of these nuclear receptors. May thereby play a role in the vascular response to injury. In the innate immune response, has an antiviral activity towards hepatitis C virus/HCV. May prevent the replication of the virus by recruiting both the hepatitis C virus non-structural protein 5A/NS5A and the ubiquitination machinery via SKP2, promoting the ubiquitin-mediated proteasomal degradation of NS5A. Also promotes virus-induced pyroptosis by activating CASP3 in the mitochondria after 'Lys-6'-linked ubiquitination by TRIM21. The chain is Interferon alpha-inducible protein 27, mitochondrial from Homo sapiens (Human).